Consider the following 201-residue polypeptide: FMN-dependent NADH:quinone oxidoreductase (201 aa).

FMN-binding positions include Ser-9 and 16–18 (SYS).

The protein belongs to the azoreductase type 1 family. Homodimer. The cofactor is FMN.

It catalyses the reaction 2 a quinone + NADH + H(+) = 2 a 1,4-benzosemiquinone + NAD(+). The enzyme catalyses N,N-dimethyl-1,4-phenylenediamine + anthranilate + 2 NAD(+) = 2-(4-dimethylaminophenyl)diazenylbenzoate + 2 NADH + 2 H(+). Quinone reductase that provides resistance to thiol-specific stress caused by electrophilic quinones. Functionally, also exhibits azoreductase activity. Catalyzes the reductive cleavage of the azo bond in aromatic azo compounds to the corresponding amines. This Mesomycoplasma hyopneumoniae (strain 7448) (Mycoplasma hyopneumoniae) protein is FMN-dependent NADH:quinone oxidoreductase.